The chain runs to 279 residues: Phosphatidylglycerol--prolipoprotein diacylglyceryl transferase (279 aa).

7 helical membrane passes run 25 to 45, 60 to 80, 103 to 123, 133 to 153, 181 to 201, 209 to 229, and 236 to 256; these read WYGL…KFFV, YFIW…ILIY, FVGI…IATI, LWSL…FGRI, PSQL…LYFY, GELI…TEFL, and IGYF…MLIL. An a 1,2-diacyl-sn-glycero-3-phospho-(1'-sn-glycerol)-binding site is contributed by Arg-152.

The protein belongs to the Lgt family.

It localises to the cell inner membrane. The catalysed reaction is L-cysteinyl-[prolipoprotein] + a 1,2-diacyl-sn-glycero-3-phospho-(1'-sn-glycerol) = an S-1,2-diacyl-sn-glyceryl-L-cysteinyl-[prolipoprotein] + sn-glycerol 1-phosphate + H(+). It functions in the pathway protein modification; lipoprotein biosynthesis (diacylglyceryl transfer). In terms of biological role, catalyzes the transfer of the diacylglyceryl group from phosphatidylglycerol to the sulfhydryl group of the N-terminal cysteine of a prolipoprotein, the first step in the formation of mature lipoproteins. In Campylobacter hominis (strain ATCC BAA-381 / DSM 21671 / CCUG 45161 / LMG 19568 / NCTC 13146 / CH001A), this protein is Phosphatidylglycerol--prolipoprotein diacylglyceryl transferase.